The following is a 329-amino-acid chain: Taste receptor type 2 member 134 (329 aa).

The Extracellular segment spans residues Met1–Lys27. Residues Met28–Gln48 form a helical membrane-spanning segment. Over Asn49–Ala68 the chain is Cytoplasmic. The chain crosses the membrane as a helical span at residues Gly69 to Val89. Over Asn90–Thr121 the chain is Extracellular. A helical membrane pass occupies residues Trp122–Ile142. The Cytoplasmic portion of the chain corresponds to Lys143–Leu153. A helical membrane pass occupies residues Leu154–Ile174. The Extracellular segment spans residues Ala175–His201. Residue Asn183 is glycosylated (N-linked (GlcNAc...) asparagine). A helical transmembrane segment spans residues Ala202–Phe222. Residues Ser223 to Lys251 are Cytoplasmic-facing. A helical membrane pass occupies residues Ser252 to Thr272. Over Arg273–His282 the chain is Extracellular. A helical membrane pass occupies residues Trp283–Ser303. Over Asn304–Gly329 the chain is Cytoplasmic.

The protein belongs to the G-protein coupled receptor T2R family. As to expression, expressed in tongue and gastrointestinal tract.

The protein resides in the membrane. Functionally, putative taste receptor which may play a role in the perception of bitterness. The polypeptide is Taste receptor type 2 member 134 (Rattus norvegicus (Rat)).